The chain runs to 547 residues: Chaperonin GroEL 1 (547 aa).

ATP-binding positions include 30–33, lysine 51, 87–91, glycine 415, and aspartate 496; these read TLGP and DGTTT.

This sequence belongs to the chaperonin (HSP60) family. Forms a cylinder of 14 subunits composed of two heptameric rings stacked back-to-back. Interacts with the co-chaperonin GroES.

The protein resides in the cytoplasm. It carries out the reaction ATP + H2O + a folded polypeptide = ADP + phosphate + an unfolded polypeptide.. Together with its co-chaperonin GroES, plays an essential role in assisting protein folding. The GroEL-GroES system forms a nano-cage that allows encapsulation of the non-native substrate proteins and provides a physical environment optimized to promote and accelerate protein folding. This chain is Chaperonin GroEL 1, found in Rhodopseudomonas palustris (strain BisA53).